Reading from the N-terminus, the 153-residue chain is Jacalin-related lectin Calsepa (153 aa).

An N-acetylalanine modification is found at Ala2. Positions 6-152 (DTISGPWGNN…VDAIGTYNRH (147 aa)) constitute a Jacalin-type lectin domain. 3 N-glycan binding regions span residues 17–18 (GN), 95–96 (DN), and 140–144 (GYYVD).

The protein belongs to the jacalin lectin family. In terms of assembly, homodimer. Not glycosylated. As to expression, rhizome (at protein level). Detected in the cortex and the pith of rhizome. Not detected in vascular tissues, pericycle, endodermis or rhizodermis.

It localises to the cytoplasm. Hemagglutinating activity is most inhibited by methyl alpha-mannopyranoside. This activity is inhibited to a less extent (about a third of the inhibition of that of methyl alpha-mannopyranoside) by methyl alpha-glucoside, other alpha-glucosides, such as maltose, isomaltose, panose or palatinose, and alpha-glucosides modified at the second position, such as methyl 2-deoxy-alpha-arabinoglucopyranoside or methyl 2-acetamido-2-deoxy alpha-glucopyranoside. Mildly inhibited by free monosaccharides, with glucose presenting at least 20-fold less inhibitory effect on hemagglutinating activity than mannose. Glycoproteins are somewhat inhibitory, the best being asialothyroglobulin and ovomucoid. Not inhibited by isomaltitol, sucrose or trehalose. Mannose-binding lectin. Preferentially binds mannose at concentrations ranging between 5 and 25 mM, but also binds glucose. Has a marked preference for methylated sugar derivatives, such as alpha-MeMan and alpha-MeGlc, at concentration down to 5 mM. Binds to N-glycans, but not to glycolipid-type or other type of glycans. Binds N-linked high-mannose-type glycans. Has a preference for smaller (Man(2)-Man(6)) high-mannose-type glycans to larger (Man(7)-Man(9)) ones. Recognizes both alpha1-6 extended and alpha1-3 extended monoantennary glycans. The addition of alpha1-2Man to the Man-alpha1-3Man-beta branch results in a significant loss of affinity, but beta1-2GlcNAc has some affinity. Has less affinity for biantennary glycans. However, affinity is significant for the biantennary complex-type N-glycans with bisecting GlcNAc. No affinity is observed for tri- and tetra-antennary glycans. Binds bisected glycans of the mouse brain. Selectively binds to bisecting N-glycans which are in back-fold conformation, and does not favor a glycan with an extend conformation. Has hemagglutinating activity against rabbit erythrocytes at 0.3 ug/ml and against trypsin-treated human erythrocytes at 5 ug/ml. Has mitogenic activity in murine cells. The polypeptide is Jacalin-related lectin Calsepa (Calystegia sepium (Hedge bindweed)).